We begin with the raw amino-acid sequence, 363 residues long: NAD(P)H-quinone oxidoreductase subunit 1, chloroplastic (363 aa).

7 helical membrane passes run 28–48 (WVLAPISIYVLAITIGVLVIV), 98–118 (FSIGPSIAVIAILLSYSVIPF), 129–149 (IGIFLWIAISSIAPIGLLMSG), 253–273 (FGLFYVASYLNLLVSSLFVTV), 274–294 (LYLGGSNLSIPYIFVPGLVEI), 300–320 (IFGTTIGIFITLAKTYLFLFI), and 336–356 (LLNLGWKFLLPISLGNLLLTT).

This sequence belongs to the complex I subunit 1 family. NDH is composed of at least 16 different subunits, 5 of which are encoded in the nucleus.

The protein localises to the plastid. The protein resides in the chloroplast thylakoid membrane. The enzyme catalyses a plastoquinone + NADH + (n+1) H(+)(in) = a plastoquinol + NAD(+) + n H(+)(out). The catalysed reaction is a plastoquinone + NADPH + (n+1) H(+)(in) = a plastoquinol + NADP(+) + n H(+)(out). In terms of biological role, NDH shuttles electrons from NAD(P)H:plastoquinone, via FMN and iron-sulfur (Fe-S) centers, to quinones in the photosynthetic chain and possibly in a chloroplast respiratory chain. The immediate electron acceptor for the enzyme in this species is believed to be plastoquinone. Couples the redox reaction to proton translocation, and thus conserves the redox energy in a proton gradient. In Citrus sinensis (Sweet orange), this protein is NAD(P)H-quinone oxidoreductase subunit 1, chloroplastic.